The sequence spans 358 residues: Membrane-bound lytic murein transglycosylase C (358 aa).

An N-terminal signal peptide occupies residues 1–19 (MKITLKKLLILAIVPFLYA). Residue cysteine 20 is the site of N-palmitoyl cysteine attachment. The S-diacylglycerol cysteine moiety is linked to residue cysteine 20.

This sequence belongs to the transglycosylase Slt family.

It is found in the cell outer membrane. The catalysed reaction is Exolytic cleavage of the (1-&gt;4)-beta-glycosidic linkage between N-acetylmuramic acid (MurNAc) and N-acetylglucosamine (GlcNAc) residues in peptidoglycan, from either the reducing or the non-reducing ends of the peptidoglycan chains, with concomitant formation of a 1,6-anhydrobond in the MurNAc residue.. Functionally, murein-degrading enzyme. May play a role in recycling of muropeptides during cell elongation and/or cell division. The protein is Membrane-bound lytic murein transglycosylase C of Actinobacillus succinogenes (strain ATCC 55618 / DSM 22257 / CCUG 43843 / 130Z).